The primary structure comprises 215 residues: Ribonuclease T (215 aa).

In terms of domain architecture, Exonuclease spans 20–194; that stretch reads VVIDVETAGF…YDTERTAVLF (175 aa). The Mg(2+) site is built by D23, E25, H181, and D186. H181 serves as the catalytic Proton donor/acceptor.

The protein belongs to the RNase T family. Homodimer. The cofactor is Mg(2+).

Functionally, trims short 3' overhangs of a variety of RNA species, leaving a one or two nucleotide 3' overhang. Responsible for the end-turnover of tRNA: specifically removes the terminal AMP residue from uncharged tRNA (tRNA-C-C-A). Also appears to be involved in tRNA biosynthesis. The sequence is that of Ribonuclease T from Shigella dysenteriae serotype 1 (strain Sd197).